A 372-amino-acid chain; its full sequence is 4-hydroxy-3-methylbut-2-en-1-yl diphosphate synthase (flavodoxin) (372 aa).

[4Fe-4S] cluster contacts are provided by cysteine 270, cysteine 273, cysteine 305, and glutamate 312.

This sequence belongs to the IspG family. It depends on [4Fe-4S] cluster as a cofactor.

It catalyses the reaction (2E)-4-hydroxy-3-methylbut-2-enyl diphosphate + oxidized [flavodoxin] + H2O + 2 H(+) = 2-C-methyl-D-erythritol 2,4-cyclic diphosphate + reduced [flavodoxin]. The protein operates within isoprenoid biosynthesis; isopentenyl diphosphate biosynthesis via DXP pathway; isopentenyl diphosphate from 1-deoxy-D-xylulose 5-phosphate: step 5/6. Functionally, converts 2C-methyl-D-erythritol 2,4-cyclodiphosphate (ME-2,4cPP) into 1-hydroxy-2-methyl-2-(E)-butenyl 4-diphosphate. In Pseudoalteromonas translucida (strain TAC 125), this protein is 4-hydroxy-3-methylbut-2-en-1-yl diphosphate synthase (flavodoxin).